Consider the following 296-residue polypeptide: Ribosomal protein L11 methyltransferase (296 aa).

Threonine 145, glycine 166, aspartate 188, and asparagine 230 together coordinate S-adenosyl-L-methionine.

It belongs to the methyltransferase superfamily. PrmA family.

The protein localises to the cytoplasm. The catalysed reaction is L-lysyl-[protein] + 3 S-adenosyl-L-methionine = N(6),N(6),N(6)-trimethyl-L-lysyl-[protein] + 3 S-adenosyl-L-homocysteine + 3 H(+). Its function is as follows. Methylates ribosomal protein L11. The sequence is that of Ribosomal protein L11 methyltransferase from Photorhabdus laumondii subsp. laumondii (strain DSM 15139 / CIP 105565 / TT01) (Photorhabdus luminescens subsp. laumondii).